Reading from the N-terminus, the 996-residue chain is UPF0182 protein CE0802 (996 aa).

A run of 7 helical transmembrane segments spans residues V19–F39, I63–F83, I115–W135, S176–I196, G212–L234, K262–L282, and L290–L310. Residues V920 to E950 are disordered. Residues A925–T939 show a composition bias toward acidic residues. The segment covering P940 to E950 has biased composition (low complexity).

The protein belongs to the UPF0182 family.

The protein resides in the cell membrane. The polypeptide is UPF0182 protein CE0802 (Corynebacterium efficiens (strain DSM 44549 / YS-314 / AJ 12310 / JCM 11189 / NBRC 100395)).